Reading from the N-terminus, the 696-residue chain is Elongation factor G (696 aa).

The 283-residue stretch at 8-290 (ERYRNIGIMA…AVLDYLPSPL (283 aa)) folds into the tr-type G domain. Residues 17–24 (AHIDAGKT), 88–92 (DTPGH), and 142–145 (NKMD) contribute to the GTP site.

Belongs to the TRAFAC class translation factor GTPase superfamily. Classic translation factor GTPase family. EF-G/EF-2 subfamily.

It is found in the cytoplasm. Its function is as follows. Catalyzes the GTP-dependent ribosomal translocation step during translation elongation. During this step, the ribosome changes from the pre-translocational (PRE) to the post-translocational (POST) state as the newly formed A-site-bound peptidyl-tRNA and P-site-bound deacylated tRNA move to the P and E sites, respectively. Catalyzes the coordinated movement of the two tRNA molecules, the mRNA and conformational changes in the ribosome. The polypeptide is Elongation factor G (Nitrosomonas eutropha (strain DSM 101675 / C91 / Nm57)).